Reading from the N-terminus, the 74-residue chain is Conotoxin AbVIA (74 aa).

A signal peptide spans 1–17 (VLIIAVLFLTACQLTTA). The propeptide occupies 18-38 (VTSSRGEQKHRALRSTDKKFK). Intrachain disulfides connect Cys43–Cys57, Cys50–Cys61, and Cys56–Cys68. Ser73 is modified (serine amide).

Belongs to the conotoxin O1 superfamily. In terms of tissue distribution, expressed by the venom duct.

The protein resides in the secreted. The sequence is that of Conotoxin AbVIA from Conus abbreviatus (Abbreviated cone).